A 429-amino-acid polypeptide reads, in one-letter code: Glutamate-1-semialdehyde 2,1-aminomutase (429 aa).

K267 carries the post-translational modification N6-(pyridoxal phosphate)lysine.

Belongs to the class-III pyridoxal-phosphate-dependent aminotransferase family. HemL subfamily. As to quaternary structure, homodimer. Pyridoxal 5'-phosphate is required as a cofactor.

The protein localises to the cytoplasm. The enzyme catalyses (S)-4-amino-5-oxopentanoate = 5-aminolevulinate. It participates in porphyrin-containing compound metabolism; protoporphyrin-IX biosynthesis; 5-aminolevulinate from L-glutamyl-tRNA(Glu): step 2/2. This chain is Glutamate-1-semialdehyde 2,1-aminomutase, found in Xanthomonas axonopodis pv. citri (strain 306).